The primary structure comprises 179 residues: Coiled-coil domain-containing protein 32 (179 aa).

The segment at 36–65 (DNAFSDSFMDSHPAGESHTAAADSAVQPAG) is disordered. The stretch at 75-98 (EVYLASLEKKLRRIKGLNEEVTSK) forms a coiled coil. The tract at residues 158–179 (LIPPESQAEKPEAGDKPAAAEQ) is disordered.

In terms of assembly, interacts with AP2S1; the interaction is direct and mediates association with adaptor protein complex 2 (AP-2).

It localises to the membrane. The protein resides in the coated pit. Functionally, regulates clathrin-mediated endocytsois of cargos such as transferrin probably through the association and modulation of adaptor protein complex 2 (AP-2). Has a role in ciliogenesis. Required for proper cephalic and left/right axis development. The sequence is that of Coiled-coil domain-containing protein 32 (Ccdc32) from Mus musculus (Mouse).